A 274-amino-acid chain; its full sequence is MAVIKCKPTSPGRRHVVKVVNSDLHKGKPFAGLLAKKSKSGGRNNTGRITVRHVGGGHKQHYRLIDFKRDKDGIPAKIERLEYDPNRTAHIALVLYADGERRYILAAKGMQAGDKIQSGVEAEIKTGNAMPLRNIPVGSVVHAVEMKPGKGAQIARSAGAYVQVVARDGAYATLRLRSGEMRKVPVDCRATFGEVGNAEHMLRQLGKAGAKRWRGVRPTVRGVAMNPVDHPHGGGEGRTSGGRHPVTPWGVPTKGYKTRSNKRTDKYIVRRRNK.

The interval Val-223–Lys-274 is disordered.

This sequence belongs to the universal ribosomal protein uL2 family. Part of the 50S ribosomal subunit. Forms a bridge to the 30S subunit in the 70S ribosome.

Functionally, one of the primary rRNA binding proteins. Required for association of the 30S and 50S subunits to form the 70S ribosome, for tRNA binding and peptide bond formation. It has been suggested to have peptidyltransferase activity; this is somewhat controversial. Makes several contacts with the 16S rRNA in the 70S ribosome. This Shewanella sp. (strain ANA-3) protein is Large ribosomal subunit protein uL2.